We begin with the raw amino-acid sequence, 152 residues long: MEVILLEKVGKLGTVGDVVDVKAGFGRNYLLPSGKAITATKASIADFETRRAELEAAAAEKKTSAEGRAKLIDNLGAITIGANAGDEGKLFGSVGARDIANAITAAGVNVTKAEVKLPEGTLREVGEYEIDLQLHVDVTHVVKVVIVADANA.

It belongs to the bacterial ribosomal protein bL9 family.

Its function is as follows. Binds to the 23S rRNA. This Saccharophagus degradans (strain 2-40 / ATCC 43961 / DSM 17024) protein is Large ribosomal subunit protein bL9.